The following is a 102-amino-acid chain: Protein ORF28 (102 aa).

A helical membrane pass occupies residues 28–48; it reads VIGLITVLFLLVIGACVYCCI.

The protein localises to the host membrane. The polypeptide is Protein ORF28 (ORF28) (Homo sapiens (Human)).